The following is a 136-amino-acid chain: Small ribosomal subunit protein bS6 (136 aa).

Residues 99-136 are disordered; the sequence is QSEMLKAEENRSERRERRERPEHGGHEGLDGDSDKADE. Positions 103-136 are enriched in basic and acidic residues; the sequence is LKAEENRSERRERRERPEHGGHEGLDGDSDKADE.

Belongs to the bacterial ribosomal protein bS6 family.

Functionally, binds together with bS18 to 16S ribosomal RNA. This chain is Small ribosomal subunit protein bS6, found in Azotobacter vinelandii (strain DJ / ATCC BAA-1303).